The chain runs to 607 residues: Terpenoid synthase 29 (607 aa).

The Mg(2+) site is built by D358, D362, N502, T506, and E510. The DDXXD motif signature appears at 358–362 (DDTYD).

This sequence belongs to the terpene synthase family. Tpsa subfamily. Mg(2+) serves as cofactor. The cofactor is Mn(2+). Predominantly expressed in flowers but also in siliques, roots, leaves and stems.

The protein resides in the cytoplasm. It participates in secondary metabolite biosynthesis; terpenoid biosynthesis. The sequence is that of Terpenoid synthase 29 (TPS29) from Arabidopsis thaliana (Mouse-ear cress).